A 413-amino-acid chain; its full sequence is Succinate--CoA ligase [ADP-forming] subunit beta, mitochondrial (413 aa).

The N-terminal 2 residues, Arg1–Arg2, are a transit peptide targeting the mitochondrion. The ATP-grasp domain occupies Met11–Ile238. Residues Lys48 and Gly55–Gly57 each bind ATP. Residues Asn208 and Asp222 each contribute to the Mg(2+) site. Substrate contacts are provided by residues Asn273 and Gly330–Met332.

It belongs to the succinate/malate CoA ligase beta subunit family. ATP-specific subunit beta subfamily. Heterodimer of an alpha and a beta subunit. The beta subunit determines specificity for ATP. The cofactor is Mg(2+). In terms of tissue distribution, widely expressed. Not present in liver.

It localises to the mitochondrion. It catalyses the reaction succinate + ATP + CoA = succinyl-CoA + ADP + phosphate. The protein operates within carbohydrate metabolism; tricarboxylic acid cycle; succinate from succinyl-CoA (ligase route): step 1/1. In terms of biological role, ATP-specific succinyl-CoA synthetase functions in the citric acid cycle (TCA), coupling the hydrolysis of succinyl-CoA to the synthesis of ATP and thus represents the only step of substrate-level phosphorylation in the TCA. The beta subunit provides nucleotide specificity of the enzyme and binds the substrate succinate, while the binding sites for coenzyme A and phosphate are found in the alpha subunit. The protein is Succinate--CoA ligase [ADP-forming] subunit beta, mitochondrial of Columba livia (Rock dove).